A 329-amino-acid chain; its full sequence is Aspartate--ammonia ligase (329 aa).

Belongs to the class-II aminoacyl-tRNA synthetase family. AsnA subfamily.

It localises to the cytoplasm. The catalysed reaction is L-aspartate + NH4(+) + ATP = L-asparagine + AMP + diphosphate + H(+). It functions in the pathway amino-acid biosynthesis; L-asparagine biosynthesis; L-asparagine from L-aspartate (ammonia route): step 1/1. In Ureaplasma parvum serovar 3 (strain ATCC 27815 / 27 / NCTC 11736), this protein is Aspartate--ammonia ligase.